The chain runs to 277 residues: Uridine-cytidine kinase 1 (277 aa).

Positions 1–30 (MASAGGGGSESAAPEADRPQPRPFLIGVSG) are disordered. 30–38 (GGTASGKST) is a binding site for ATP. Residues Asp-87, Tyr-115, His-120, Arg-169, Arg-178, and Gln-186 each contribute to the substrate site. ATP is bound at residue Asp-215. Residues 238 to 250 (RHRGGPNGRNHKR) are compositionally biased toward basic residues. The disordered stretch occupies residues 238-277 (RHRGGPNGRNHKRTFPEPGDHPGVLATGKRSHLESSSRPH). The residue at position 251 (Thr-251) is a Phosphothreonine. A compositionally biased stretch (basic and acidic residues) spans 268-277 (SHLESSSRPH).

The protein belongs to the uridine kinase family.

The enzyme catalyses uridine + ATP = UMP + ADP + H(+). It catalyses the reaction cytidine + ATP = CMP + ADP + H(+). It participates in pyrimidine metabolism; CTP biosynthesis via salvage pathway; CTP from cytidine: step 1/3. It functions in the pathway pyrimidine metabolism; UMP biosynthesis via salvage pathway; UMP from uridine: step 1/1. Phosphorylates uridine and cytidine to uridine monophosphate and cytidine monophosphate. Does not phosphorylate deoxyribonucleosides or purine ribonucleosides. Can use ATP or GTP as a phosphate donor. This is Uridine-cytidine kinase 1 (Uck1) from Mus musculus (Mouse).